Here is a 260-residue protein sequence, read N- to C-terminus: 23S rRNA (guanosine-2'-O-)-methyltransferase RlmB (260 aa).

Residues Gly197, Ile217, and Leu226 each contribute to the S-adenosyl-L-methionine site.

It belongs to the class IV-like SAM-binding methyltransferase superfamily. RNA methyltransferase TrmH family. RlmB subfamily.

The protein localises to the cytoplasm. It carries out the reaction guanosine(2251) in 23S rRNA + S-adenosyl-L-methionine = 2'-O-methylguanosine(2251) in 23S rRNA + S-adenosyl-L-homocysteine + H(+). Its function is as follows. Specifically methylates the ribose of guanosine 2251 in 23S rRNA. This chain is 23S rRNA (guanosine-2'-O-)-methyltransferase RlmB, found in Nitrosomonas europaea (strain ATCC 19718 / CIP 103999 / KCTC 2705 / NBRC 14298).